The sequence spans 611 residues: Methionine--tRNA ligase (611 aa).

Positions 12 to 22 match the 'HIGH' region motif; that stretch reads PYANGPRHIGH. 4 residues coordinate Zn(2+): Cys-144, Cys-147, Cys-157, and Cys-160. The short motif at 348–352 is the 'KMSKS' region element; that stretch reads KFSSS. Ser-351 contacts ATP.

It belongs to the class-I aminoacyl-tRNA synthetase family. MetG type 1 subfamily. Monomer. The cofactor is Zn(2+).

It is found in the cytoplasm. The enzyme catalyses tRNA(Met) + L-methionine + ATP = L-methionyl-tRNA(Met) + AMP + diphosphate. Functionally, is required not only for elongation of protein synthesis but also for the initiation of all mRNA translation through initiator tRNA(fMet) aminoacylation. The polypeptide is Methionine--tRNA ligase (Corynebacterium urealyticum (strain ATCC 43042 / DSM 7109)).